Here is an 898-residue protein sequence, read N- to C-terminus: Magnesium-transporting ATPase, P-type 1 (898 aa).

Residues 1 to 94 lie on the Cytoplasmic side of the membrane; the sequence is MFKEIFTRLI…QPSPWWVHLW (94 aa). Residues 95–115 form a helical membrane-spanning segment; the sequence is VCYRNPFNILLTILGAISYAT. Position 116 (Glu-116) is a topological domain, extracellular. Residues 117–137 traverse the membrane as a helical segment; that stretch reads DLFAAGVIALMVAISTLLNFI. Residues 138–287 lie on the Cytoplasmic side of the membrane; that stretch reads QEARSTKAAD…PNAFQQGISR (150 aa). Residues 288 to 308 form a helical membrane-spanning segment; sequence VSMLLIRFMLVMAPVVLLING. The Extracellular segment spans residues 309-317; that stretch reads YTKGDWWEA. A helical membrane pass occupies residues 318–335; it reads ALFALSVAVGLTPEMLPM. Glu-331 lines the Mg(2+) pocket. The Cytoplasmic portion of the chain corresponds to 336–695; the sequence is IVTSTLARGA…IEGRRTFANM (360 aa). The 4-aspartylphosphate intermediate role is filled by Asp-373. The Mg(2+) site is built by Asp-641, Asp-645, and Asn-709. The helical transmembrane segment at 696-715 threads the bilayer; that stretch reads LKYIKMTASSNFGNVFSVLV. The Extracellular segment spans residues 716 to 724; it reads ASAFLPFLP. The helical transmembrane segment at 725 to 744 threads the bilayer; sequence MLPLHLLIQNLLYDVSQVAI. Mg(2+) contacts are provided by Asn-734 and Asp-738. Topologically, residues 745–766 are cytoplasmic; that stretch reads PFDNVDDEQIQKPQRWNPADLG. Residues 767 to 790 traverse the membrane as a helical segment; it reads RFMIFFGPISSIFDILTFCLMWWV. At 791–799 the chain is on the extracellular side; sequence FHANTPETQ. Residues 800–818 traverse the membrane as a helical segment; the sequence is TLFQSGWFVVGLLSQTLIV. The Cytoplasmic portion of the chain corresponds to 819 to 831; it reads HMIRTRRVPFIQS. Residues 832 to 851 form a helical membrane-spanning segment; sequence CASWPLMIMTVIVMIVGIAL. Residues 852–866 lie on the Extracellular side of the membrane; that stretch reads PFSPLASYLQLQALP. Residues 867–886 form a helical membrane-spanning segment; the sequence is LSYFPWLVAILAGYMTLTQL. Topologically, residues 887–898 are cytoplasmic; that stretch reads VKGFYSRRYGWQ.

It belongs to the cation transport ATPase (P-type) (TC 3.A.3) family. Type IIIB subfamily.

It is found in the cell inner membrane. The enzyme catalyses Mg(2+)(out) + ATP + H2O = Mg(2+)(in) + ADP + phosphate + H(+). Functionally, mediates magnesium influx to the cytosol. This Escherichia coli O157:H7 protein is Magnesium-transporting ATPase, P-type 1 (mgtA).